The primary structure comprises 231 residues: Ureidoacrylate amidohydrolase RutB (231 aa).

Residue D25 is the Proton acceptor of the active site. The active site involves K134. Catalysis depends on C167, which acts as the Nucleophile.

The protein belongs to the isochorismatase family. RutB subfamily.

It catalyses the reaction (Z)-3-ureidoacrylate + H2O + H(+) = (Z)-3-aminoacrylate + NH4(+) + CO2. It carries out the reaction (Z)-3-ureidoacrylate + H2O = (Z)-3-aminoacrylate + carbamate + H(+). The enzyme catalyses (Z)-2-methylureidoacrylate + H2O + H(+) = (Z)-2-methylaminoacrylate + NH4(+) + CO2. In terms of biological role, hydrolyzes ureidoacrylate to form aminoacrylate and carbamate. The carbamate hydrolyzes spontaneously, thereby releasing one of the nitrogen atoms of the pyrimidine ring as ammonia and one of its carbon atoms as CO2. This chain is Ureidoacrylate amidohydrolase RutB, found in Escherichia coli (strain SMS-3-5 / SECEC).